The chain runs to 296 residues: Probable lipid kinase YegS-like (296 aa).

One can recognise a DAGKc domain in the interval 1-130; the sequence is MPHTLLILNG…IDLAQVNGEH (130 aa). ATP is bound by residues T37, 63–69, and T92; that span reads GDGTINE. Positions 212, 215, and 217 each coordinate Mg(2+). Catalysis depends on E268, which acts as the Proton acceptor.

The protein belongs to the diacylglycerol/lipid kinase family. YegS lipid kinase subfamily. Requires Mg(2+) as cofactor. Ca(2+) is required as a cofactor.

It is found in the cytoplasm. Probably phosphorylates lipids; the in vivo substrate is unknown. The protein is Probable lipid kinase YegS-like of Yersinia pseudotuberculosis serotype I (strain IP32953).